The sequence spans 317 residues: uncharacterized protein (317 aa).

Topologically, residues 1-13 (MKRVTGVFLTLLR) are cytoplasmic. Residues 14–34 (FSQFASSVLVMSLLAYAIHAY) traverse the membrane as a helical segment. Topologically, residues 35 to 49 (GNRGNKKTNFTLATG) are extracellular. N-linked (GlcNAc...) asparagine glycosylation is present at Asn-43. Residues 50–70 (VISVFYLIALGILCLALPTLI) traverse the membrane as a helical segment. A topological domain (cytoplasmic) is located at residue Tyr-71. A helical transmembrane segment spans residues 72 to 92 (IGMYFCAELIVCMLWLAAFVV). At 93-133 (LAKAQGERSCSNTNADGLYYNPYSGQYTADSHRRACNSSQA) the chain is on the extracellular side. Residue Asn-129 is glycosylated (N-linked (GlcNAc...) asparagine). A helical transmembrane segment spans residues 134-154 (AIAFSGLCFVLFLISVILLGI). Residues 155 to 317 (NVLTPIRKRY…EPNRNVNQMP (163 aa)) are Cytoplasmic-facing. The segment at 204–317 (RTGDVEAGAG…EPNRNVNQMP (114 aa)) is disordered. The span at 239–250 (TTTTNTRYTTTT) shows a compositional bias: low complexity. The segment covering 256-282 (RYTTNDRNPGSANVANSAVDQHAYSTD) has biased composition (polar residues). The span at 284–295 (SGDRSYQEKVTE) shows a compositional bias: basic and acidic residues. Over residues 302–317 (MSGSTAEPNRNVNQMP) the composition is skewed to polar residues.

The protein localises to the membrane. This is an uncharacterized protein from Saccharomyces cerevisiae (strain ATCC 204508 / S288c) (Baker's yeast).